The following is a 206-amino-acid chain: Dephospho-CoA kinase (206 aa).

The DPCK domain maps to 4–200; sequence IVALTGGIGS…HRYLKLATAA (197 aa). Residue 12–17 coordinates ATP; sequence GSGKST.

The protein belongs to the CoaE family.

It is found in the cytoplasm. The enzyme catalyses 3'-dephospho-CoA + ATP = ADP + CoA + H(+). Its pathway is cofactor biosynthesis; coenzyme A biosynthesis; CoA from (R)-pantothenate: step 5/5. Catalyzes the phosphorylation of the 3'-hydroxyl group of dephosphocoenzyme A to form coenzyme A. The sequence is that of Dephospho-CoA kinase from Yersinia pestis.